We begin with the raw amino-acid sequence, 175 residues long: Acetyl-CoA decarbonylase/synthase complex subunit epsilon 2 (175 aa).

The protein belongs to the CdhB family. As to quaternary structure, heterotetramer of two alpha and two epsilon subunits. The ACDS complex is made up of alpha, epsilon, beta, gamma and delta subunits with a probable stoichiometry of (alpha(2)epsilon(2))(4)-beta(8)-(gamma(1)delta(1))(8).

Part of a complex that catalyzes the reversible cleavage of acetyl-CoA, allowing autotrophic growth from CO(2). The alpha-epsilon subcomponent functions as a carbon monoxide dehydrogenase. The precise role of the epsilon subunit is unclear; it may have a stabilizing role within the alpha(2)epsilon(2) component and/or be involved in electron transfer to FAD during a potential FAD-mediated CO oxidation. The protein is Acetyl-CoA decarbonylase/synthase complex subunit epsilon 2 (cdhB2) of Archaeoglobus fulgidus (strain ATCC 49558 / DSM 4304 / JCM 9628 / NBRC 100126 / VC-16).